The chain runs to 177 residues: Ferritin, heavy subunit (177 aa).

Residues 7–156 form the Ferritin-like diiron domain; it reads QNFHQDCEAA…DWVTNLRRMG (150 aa). Positions 24, 59, 62, 104, and 138 each coordinate Fe cation.

The protein belongs to the ferritin family. In terms of assembly, oligomer of 24 subunits. There are at least two types of subunits. The functional molecule forms a roughly spherical shell with a diameter of 12 nm and contains a central cavity into which the insoluble mineral iron core is deposited. Liver, gonads, head kidney, heart and spleen.

The catalysed reaction is 4 Fe(2+) + O2 + 4 H(+) = 4 Fe(3+) + 2 H2O. In terms of biological role, stores iron in a soluble, non-toxic, readily available form. Important for iron homeostasis. Has ferroxidase activity. Iron is taken up in the ferrous form and deposited as ferric hydroxides after oxidation. This Salmo salar (Atlantic salmon) protein is Ferritin, heavy subunit.